A 62-amino-acid chain; its full sequence is Photosystem II reaction center protein Z (62 aa).

A run of 2 helical transmembrane segments spans residues 8–28 (AIFA…VVFA) and 41–61 (FSGT…NSLI).

It belongs to the PsbZ family. As to quaternary structure, PSII is composed of 1 copy each of membrane proteins PsbA, PsbB, PsbC, PsbD, PsbE, PsbF, PsbH, PsbI, PsbJ, PsbK, PsbL, PsbM, PsbT, PsbY, PsbZ, Psb30/Ycf12, at least 3 peripheral proteins of the oxygen-evolving complex and a large number of cofactors. It forms dimeric complexes.

The protein localises to the plastid. The protein resides in the chloroplast thylakoid membrane. May control the interaction of photosystem II (PSII) cores with the light-harvesting antenna, regulates electron flow through the 2 photosystem reaction centers. PSII is a light-driven water plastoquinone oxidoreductase, using light energy to abstract electrons from H(2)O, generating a proton gradient subsequently used for ATP formation. The polypeptide is Photosystem II reaction center protein Z (Acorus gramineus (Dwarf sweet flag)).